The primary structure comprises 176 residues: 3-hydroxyacyl-[acyl-carrier-protein] dehydratase FabZ (176 aa).

His54 is an active-site residue.

It belongs to the thioester dehydratase family. FabZ subfamily.

It localises to the cytoplasm. The enzyme catalyses a (3R)-hydroxyacyl-[ACP] = a (2E)-enoyl-[ACP] + H2O. In terms of biological role, involved in unsaturated fatty acids biosynthesis. Catalyzes the dehydration of short chain beta-hydroxyacyl-ACPs and long chain saturated and unsaturated beta-hydroxyacyl-ACPs. The polypeptide is 3-hydroxyacyl-[acyl-carrier-protein] dehydratase FabZ (Yersinia pseudotuberculosis serotype O:1b (strain IP 31758)).